Consider the following 254-residue polypeptide: uncharacterized protein (254 aa).

A coiled-coil region spans residues 66–111; that stretch reads DMVSEMNKRMDDLAARIVVLEDEKAELRRINQRLTEKVRDKDMEKA.

This is an uncharacterized protein from Ostreid herpesvirus 1 (isolate France) (OsHV-1).